The sequence spans 371 residues: Aminomethyltransferase (371 aa).

It belongs to the GcvT family. In terms of assembly, the glycine cleavage system is composed of four proteins: P, T, L and H.

It catalyses the reaction N(6)-[(R)-S(8)-aminomethyldihydrolipoyl]-L-lysyl-[protein] + (6S)-5,6,7,8-tetrahydrofolate = N(6)-[(R)-dihydrolipoyl]-L-lysyl-[protein] + (6R)-5,10-methylene-5,6,7,8-tetrahydrofolate + NH4(+). The glycine cleavage system catalyzes the degradation of glycine. The sequence is that of Aminomethyltransferase from Leptospira borgpetersenii serovar Hardjo-bovis (strain JB197).